Reading from the N-terminus, the 135-residue chain is Holo-[acyl-carrier-protein] synthase (135 aa).

D7 and E57 together coordinate Mg(2+).

It belongs to the P-Pant transferase superfamily. AcpS family. Requires Mg(2+) as cofactor.

It localises to the cytoplasm. The enzyme catalyses apo-[ACP] + CoA = holo-[ACP] + adenosine 3',5'-bisphosphate + H(+). Functionally, transfers the 4'-phosphopantetheine moiety from coenzyme A to a Ser of acyl-carrier-protein. The protein is Holo-[acyl-carrier-protein] synthase of Corynebacterium glutamicum (strain R).